Here is a 171-residue protein sequence, read N- to C-terminus: uncharacterized protein (171 aa).

The 68-residue stretch at 30–97 folds into the HTH gntR-type domain; sequence AGRVSAAYHA…PKKGIIICAL (68 aa). A DNA-binding region (H-T-H motif) is located at residues 57-76; the sequence is EIEIARQLGMSRTPVHEAMA.

This is an uncharacterized protein from Agrobacterium vitis (Rhizobium vitis).